The chain runs to 296 residues: 4-hydroxy-tetrahydrodipicolinate synthase (296 aa).

T49 contacts pyruvate. The active-site Proton donor/acceptor is the Y137. The Schiff-base intermediate with substrate role is filled by K166. I208 is a pyruvate binding site.

It belongs to the DapA family. Homotetramer; dimer of dimers.

The protein resides in the cytoplasm. The enzyme catalyses L-aspartate 4-semialdehyde + pyruvate = (2S,4S)-4-hydroxy-2,3,4,5-tetrahydrodipicolinate + H2O + H(+). The protein operates within amino-acid biosynthesis; L-lysine biosynthesis via DAP pathway; (S)-tetrahydrodipicolinate from L-aspartate: step 3/4. In terms of biological role, catalyzes the condensation of (S)-aspartate-beta-semialdehyde [(S)-ASA] and pyruvate to 4-hydroxy-tetrahydrodipicolinate (HTPA). This chain is 4-hydroxy-tetrahydrodipicolinate synthase, found in Chlorobium phaeobacteroides (strain DSM 266 / SMG 266 / 2430).